We begin with the raw amino-acid sequence, 385 residues long: Palmitoyl-[acyl-carrier-protein] 4-desaturase, chloroplastic (385 aa).

The transit peptide at 1 to 36 (MAMKLNALMTLQCPKRNMFTRIAPPQAGRVRSKVSM) directs the protein to the chloroplast. Glu126, Glu164, His167, Glu217, Glu250, and His253 together coordinate Fe cation.

Belongs to the fatty acid desaturase type 2 family. Homodimer. Fe(2+) is required as a cofactor. Found only in tissues which synthesize petroselinic acid, such as developing seeds.

It is found in the plastid. Its subcellular location is the chloroplast. The enzyme catalyses hexadecanoyl-[ACP] + 2 reduced [2Fe-2S]-[ferredoxin] + O2 + 2 H(+) = (4Z)-hexadecenoyl-[ACP] + 2 oxidized [2Fe-2S]-[ferredoxin] + 2 H2O. Its function is as follows. Converts palmitoyl-ACP to (4Z)-hexadec-4-enoyl-ACP by introduction of a cis double bond between carbons 4 and 5 of the acyl chain. The sequence is that of Palmitoyl-[acyl-carrier-protein] 4-desaturase, chloroplastic from Coriandrum sativum (Coriander).